Consider the following 375-residue polypeptide: Erythronate-4-phosphate dehydrogenase (375 aa).

Residue Ser-49 participates in substrate binding. The NAD(+) site is built by Asp-150 and Thr-178. Arg-211 is a catalytic residue. Asp-231 is a binding site for NAD(+). Residue Glu-236 is part of the active site. The active-site Proton donor is the His-253. Gly-256 contributes to the NAD(+) binding site.

This sequence belongs to the D-isomer specific 2-hydroxyacid dehydrogenase family. PdxB subfamily. In terms of assembly, homodimer.

Its subcellular location is the cytoplasm. The enzyme catalyses 4-phospho-D-erythronate + NAD(+) = (R)-3-hydroxy-2-oxo-4-phosphooxybutanoate + NADH + H(+). It participates in cofactor biosynthesis; pyridoxine 5'-phosphate biosynthesis; pyridoxine 5'-phosphate from D-erythrose 4-phosphate: step 2/5. Its function is as follows. Catalyzes the oxidation of erythronate-4-phosphate to 3-hydroxy-2-oxo-4-phosphonooxybutanoate. This Hydrogenovibrio crunogenus (strain DSM 25203 / XCL-2) (Thiomicrospira crunogena) protein is Erythronate-4-phosphate dehydrogenase.